A 329-amino-acid polypeptide reads, in one-letter code: MDKYLVKMPIKSTKNVVSEEKISVKEEKPKPKKVVKEQSAIANKRKNLDTPEIVNKENAEVENPPKRRSTRVTRSTRSMADVGTPSPEKEIPEKLPFIKYRGAIKYFTESQEIAASADEVMQWVDQQTHTEIVPMAFDMEWPFSFQTGPGKSSVIQICVDERCCYVYQLSNLKKIPAALVALINHPKVRLHGVNIKADFRKLARDFPEVAAEPLIEKCVDLGVWCNEVCETGGRWSLERLANFIAKKAMDKSKKVRMSKWHVIPLDENQLMYAAIDVYIGQVIYREIEQREQTKLKNEAEFKEQNGENAFKAVKALGETFLTKINEVTL.

The segment at 26–88 is disordered; sequence EEKPKPKKVV…MADVGTPSPE (63 aa). Over residues 46-65 the composition is skewed to basic and acidic residues; sequence KNLDTPEIVNKENAEVENPP. Phosphoserine is present on residues Ser78 and Ser86. One can recognise a 3'-5' exonuclease domain in the interval 130–288; it reads TEIVPMAFDM…IGQVIYREIE (159 aa). Positions 138, 140, and 276 each coordinate Mg(2+).

This sequence belongs to the WRNexo family.

Its subcellular location is the nucleus. Has exonuclease activity on both single-stranded and duplex templates bearing overhangs, but not blunt ended duplex DNA, and cleaves in a 3'-5' direction. Essential for the formation of DNA replication focal centers. Has an important role in maintaining genome stability. This is 3'-5' exonuclease from Drosophila mojavensis (Fruit fly).